We begin with the raw amino-acid sequence, 173 residues long: MKAFFNDPFTPFGKWLSQPFYVHGLTFLLLLSAVIFRPVLDYIEGSSRFHEIENELAVKRSELLHQQKILTSLQQQSESRKLSPELAAQIIPLNKQIQRLAARNGLSQHLRWEMGQKPILHLQLTGHFEKTKTFLSALLANSSQLSVSRLQFMKPEDGPLQTEIIFQLDKETK.

Its function is as follows. Involved in transformation (genetic competence for DNA uptake). The polypeptide is Competence protein C (comC) (Haemophilus influenzae (strain ATCC 51907 / DSM 11121 / KW20 / Rd)).